We begin with the raw amino-acid sequence, 197 residues long: Ribose 1,5-bisphosphate phosphokinase PhnN (197 aa).

Residue 21-28 participates in ATP binding; sequence GPSGAGKD.

Belongs to the ribose 1,5-bisphosphokinase family.

The enzyme catalyses alpha-D-ribose 1,5-bisphosphate + ATP = 5-phospho-alpha-D-ribose 1-diphosphate + ADP. It functions in the pathway metabolic intermediate biosynthesis; 5-phospho-alpha-D-ribose 1-diphosphate biosynthesis; 5-phospho-alpha-D-ribose 1-diphosphate from D-ribose 5-phosphate (route II): step 3/3. In terms of biological role, catalyzes the phosphorylation of ribose 1,5-bisphosphate to 5-phospho-D-ribosyl alpha-1-diphosphate (PRPP). This is Ribose 1,5-bisphosphate phosphokinase PhnN from Rhizobium etli (strain CIAT 652).